The sequence spans 335 residues: 3-hydroxyproline 2-epimerase (335 aa).

The active-site Proton acceptor is the Cys-91. Residues Gly-92–His-93, Asp-251, and Gly-256–Ser-257 each bind substrate.

Belongs to the proline racemase family.

It catalyses the reaction trans-3-hydroxy-L-proline = cis-3-hydroxy-D-proline. The enzyme catalyses trans-4-hydroxy-L-proline = cis-4-hydroxy-D-proline. Functionally, catalyzes the epimerization of trans-3-hydroxy-L-proline (t3LHyp) to cis-3-hydroxy-D-proline (c3DHyp) in vitro. Can also catalyze the epimerization of trans-4-hydroxy-L-proline (t3LHyp) to cis-4-hydroxy-D-proline (c4DHyp), albeit with 3.6-fold lower efficiency. Displays no proline racemase activity. The chain is 3-hydroxyproline 2-epimerase from Burkholderia multivorans (strain ATCC 17616 / 249).